A 429-amino-acid polypeptide reads, in one-letter code: MLDIKWIRANPDKLDESLSKRGIDSVSKSIIHIDSEKRTLISLIQKLQHERKEKSSSVAHIYDKSSTDFEEIQNDVKLINQKITELETSLLHHEKRLSEIMDNLPNLVADDVPYGTNSDMNKVLKECGTIQNIKFPKHHYEIGKNLGMMDFNTATKMSGSRFVILKHDLAKLERALINFMIDVHTTEFNFFEVSPPCLVKDHAMYNVGQLPKFADASFETTTGYRLIPTAEVPLTNIFANTTLLEEKLPIRLVAFTPCFRSEVGSAGKDVKGMLRMHQFGKVELFTIATPKESNREFEYLTAAAEKILEKLGLPYRVVLLCSGDIGFAAHKTYDLEVWLPAQNCYREISSCSHFSSFQARRSLSKYRELCSKKVNFLHTINGSGLAVGRTIIAILENYQNSDGSVTIPEKLRNYMGGQKLITPLTETVF.

Residue 229-231 (TAE) participates in L-serine binding. Residue 260–262 (RSE) coordinates ATP. Glutamate 283 contacts L-serine. 347–350 (EISS) contributes to the ATP binding site. Serine 383 contacts L-serine.

It belongs to the class-II aminoacyl-tRNA synthetase family. Type-1 seryl-tRNA synthetase subfamily. In terms of assembly, homodimer. The tRNA molecule binds across the dimer.

The protein resides in the cytoplasm. The catalysed reaction is tRNA(Ser) + L-serine + ATP = L-seryl-tRNA(Ser) + AMP + diphosphate + H(+). It carries out the reaction tRNA(Sec) + L-serine + ATP = L-seryl-tRNA(Sec) + AMP + diphosphate + H(+). Its pathway is aminoacyl-tRNA biosynthesis; selenocysteinyl-tRNA(Sec) biosynthesis; L-seryl-tRNA(Sec) from L-serine and tRNA(Sec): step 1/1. Catalyzes the attachment of serine to tRNA(Ser). Is also able to aminoacylate tRNA(Sec) with serine, to form the misacylated tRNA L-seryl-tRNA(Sec), which will be further converted into selenocysteinyl-tRNA(Sec). This Orientia tsutsugamushi (strain Ikeda) (Rickettsia tsutsugamushi) protein is Serine--tRNA ligase.